Consider the following 628-residue polypeptide: Netrin-4 (628 aa).

An N-terminal signal peptide occupies residues 1-18; it reads MGSCARLLLLWGCTVVAA. Positions 30–261 constitute a Laminin N-terminal domain; it reads CEKACNPRMG…AIYDFIVKGS (232 aa). N-linked (GlcNAc...) asparagine glycosylation is found at asparagine 56 and asparagine 163. 12 disulfide bridges follow: cysteine 262–cysteine 271, cysteine 264–cysteine 293, cysteine 295–cysteine 304, cysteine 307–cysteine 329, cysteine 332–cysteine 341, cysteine 334–cysteine 359, cysteine 362–cysteine 371, cysteine 374–cysteine 392, cysteine 395–cysteine 413, cysteine 397–cysteine 420, cysteine 422–cysteine 431, and cysteine 434–cysteine 446. 3 consecutive Laminin EGF-like domains span residues 262 to 331, 332 to 394, and 395 to 448; these read CFCN…ECRT, CKCN…ACKP, and CSCH…GCRP. A glycan (N-linked (GlcNAc...) asparagine) is linked at asparagine 353. The N-linked (GlcNAc...) asparagine glycan is linked to asparagine 483. 2 disulfide bridges follow: cysteine 506/cysteine 576 and cysteine 520/cysteine 627. The NTR domain occupies 506-627; the sequence is CECKEQTLGN…KVMDILKREC (122 aa).

In terms of assembly, may form a homodimer.

Its subcellular location is the secreted. It is found in the extracellular space. The protein resides in the extracellular matrix. Its function is as follows. May play an important role in neural, kidney and vascular development. This chain is Netrin-4 (NTN4), found in Pongo abelii (Sumatran orangutan).